The chain runs to 335 residues: Deoxyhypusine hydroxylase (335 aa).

HEAT-like PBS-type repeat units lie at residues 71–97, 104–130, 200–233, 238–264, and 271–298; these read LKHE…VAKD, CRHE…LRDN, LRYR…GLKD, FRHE…ALSN, and VRHE…FLND. Residues histidine 73, glutamate 74, histidine 106, and glutamate 107 each contribute to the Fe cation site. Residues histidine 240, glutamate 241, histidine 273, and glutamate 274 each contribute to the Fe cation site.

The protein belongs to the deoxyhypusine hydroxylase family. Requires Fe(2+) as cofactor.

It localises to the cytoplasm. The protein resides in the nucleus. The catalysed reaction is [eIF5A protein]-deoxyhypusine + AH2 + O2 = [eIF5A protein]-hypusine + A + H2O. The protein operates within protein modification; eIF5A hypusination. In terms of biological role, catalyzes the hydroxylation of the N(6)-(4-aminobutyl)-L-lysine intermediate to form hypusine, an essential post-translational modification only found in mature eIF-5A factor. This is Deoxyhypusine hydroxylase (lia1) from Neosartorya fischeri (strain ATCC 1020 / DSM 3700 / CBS 544.65 / FGSC A1164 / JCM 1740 / NRRL 181 / WB 181) (Aspergillus fischerianus).